The following is a 37-amino-acid chain: Large ribosomal subunit protein bL36 (37 aa).

Belongs to the bacterial ribosomal protein bL36 family.

The chain is Large ribosomal subunit protein bL36 from Borreliella burgdorferi (strain ATCC 35210 / DSM 4680 / CIP 102532 / B31) (Borrelia burgdorferi).